Here is a 601-residue protein sequence, read N- to C-terminus: Putative pentatricopeptide repeat-containing protein At3g25060, mitochondrial (601 aa).

The transit peptide at 1–80 directs the protein to the mitochondrion; it reads MVQTKHFCML…KVFDELPQRG (80 aa). PPR repeat units lie at residues 49 to 79, 80 to 114, 115 to 149, 150 to 180, 181 to 215, 216 to 250, 251 to 281, 282 to 316, 317 to 347, 351 to 381, 382 to 416, 417 to 452, and 453 to 487; these read GSSISRDLIASCGRIGEISYARKVFDELPQR, GVSVYNSMIVVYSRGKNPDEVLRLYDQMIAEKIQP, DSSTFTMTIKACLSGLVLEKGEAVWCKAVDFGYKN, DVFVCSSVLNLYMKCGKMDEAEVLFGKMAKR, DVICWTTMVTGFAQAGKSLKAVEFYREMQNEGFGR, DRVVMLGLLQASGDLGDTKMGRSVHGYLYRTGLPM, NVVVETSLVDMYAKVGFIEVASRVFSRMMFK, TAVSWGSLISGFAQNGLANKAFEAVVEMQSLGFQP, DLVTLVGVLVACSQVGSLKTGRLVHCYILKR, DRVTATALMDMYSKCGALSSSREIFEHVGRK, DLVCWNTMISCYGIHGNGQEVVSLFLKMTESNIEP, DHATFASLLSALSHSGLVEQGQHWFSVMINKYKIQP, and SEKHYVCLIDLLARAGRVEEALDMINSEKLDNALP. Positions 488 to 563 are type E motif; sequence IWVALLSGCI…VPGYSAIEVN (76 aa). The interval 564-594 is type E(+) motif; the sequence is GELRTFLMEDLSHHEHYHMLQVLRNLKTEIR.

It belongs to the PPR family. PCMP-E subfamily.

The protein localises to the mitochondrion. The protein is Putative pentatricopeptide repeat-containing protein At3g25060, mitochondrial (PCMP-E96) of Arabidopsis thaliana (Mouse-ear cress).